The sequence spans 460 residues: V-type ATP synthase beta chain (460 aa).

It belongs to the ATPase alpha/beta chains family.

Functionally, produces ATP from ADP in the presence of a proton gradient across the membrane. The V-type beta chain is a regulatory subunit. This Anaeromyxobacter sp. (strain Fw109-5) protein is V-type ATP synthase beta chain.